Reading from the N-terminus, the 528-residue chain is Beta-hexosaminidase subunit alpha (528 aa).

Positions 1–22 are cleaved as a signal peptide; it reads MAGCRLWVSLLLAAALACLATA. The propeptide occupies 23-88; that stretch reads LWPWPQYIQT…PRPSFSNKQQ (66 aa). A disulfide bridge connects residues Cys-58 and Cys-104. 3 N-linked (GlcNAc...) asparagine glycosylation sites follow: Asn-115, Asn-157, and Asn-295. Residues Cys-277 and Cys-328 are joined by a disulfide bond. Glu-323 functions as the Proton donor in the catalytic mechanism. The tract at residues 422-423 is critical for hydrolysis GM2 gangliosides; it reads NR. The N-linked (GlcNAc...) asparagine glycan is linked to Asn-487. Cys-504 and Cys-521 are joined by a disulfide.

It belongs to the glycosyl hydrolase 20 family. In terms of assembly, there are 3 beta-hexosaminidase isozymes: isozyme A (hexosaminidase A) is a heterodimer composed of one subunit alpha and one subunit beta (chain A and B); isozyme B (hexosaminidase B) is a homodimer of two beta subunits (two chains A and B); isozyme S (hexosaminidase S) is a homodimer of two alpha subunits. The composition of the dimer (isozyme A versus isozyme S) has a significant effect on the substrate specificity of the alpha subunit active site. As to expression, ubiquitous. Most abundant in testis, adrenal, epididymis and heart. Low levels seen in the liver.

It localises to the lysosome. It carries out the reaction Hydrolysis of terminal non-reducing N-acetyl-D-hexosamine residues in N-acetyl-beta-D-hexosaminides.. It catalyses the reaction N-acetyl-beta-D-galactosaminyl-(1-&gt;4)-beta-D-3-sulfogalactosyl-(1-&gt;4)-beta-D-glucosyl-(1&lt;-&gt;1')-ceramide + H2O = a beta-D-3-sulfogalactosyl-(1-&gt;4)-beta-D-glucosyl-(1&lt;-&gt;1')-ceramide + N-acetyl-beta-D-galactosamine. The enzyme catalyses a ganglioside GM2 (d18:1(4E)) + H2O = a ganglioside GM3 (d18:1(4E)) + N-acetyl-beta-D-galactosamine. The catalysed reaction is a ganglioside GM2 + H2O = a ganglioside GM3 + N-acetyl-beta-D-galactosamine. It carries out the reaction beta-D-GalNAc-(1-&gt;4)-alpha-L-IdoA-(1-&gt;3)-beta-D-GalNAc-4-sulfate-(1-&gt;4)-alpha-L-IdoA-(1-&gt;3)-D-GalNAc-4-sulfate + H2O = alpha-L-IdoA-(1-&gt;3)-beta-D-GalNAc-4-sulfate-(1-&gt;4)-alpha-L-IdoA-(1-&gt;3)-D-GalNAc-4-sulfate + N-acetyl-D-galactosamine. It catalyses the reaction N-acetyl-beta-D-6-sulfogalactosaminyl-(1-&gt;4)-alpha-L-iduronyl-(1-&gt;3)-N-acetyl-D-6-sulfogalactosamine + H2O = alpha-L-iduronyl-(1-&gt;3)-N-acetyl-D-6-sulfogalactosamine + N-acetyl-D-6-sulfogalactosamine. Its activity is regulated as follows. Addition of GM2A stimulates the hydrolysis of sulfated glycosphingolipid SM2 and the ganglioside GM2. Hydrolyzes the non-reducing end N-acetyl-D-hexosamine and/or sulfated N-acetyl-D-hexosamine of glycoconjugates, such as the oligosaccharide moieties from proteins and neutral glycolipids, or from certain mucopolysaccharides. The isozyme S is as active as the isozyme A on the anionic bis-sulfated glycans, the chondroitin-6-sulfate trisaccharide (C6S-3), and the dermatan sulfate pentasaccharide, and the sulfated glycosphingolipid SM2. The isozyme B does not hydrolyze each of these substrates, however hydrolyzes efficiently neutral oligosaccharide. Only the isozyme A is responsible for the degradation of GM2 gangliosides in the presence of GM2A. The chain is Beta-hexosaminidase subunit alpha from Mus musculus (Mouse).